The sequence spans 375 residues: Alcohol dehydrogenase 1 (375 aa).

Position 2 is an N-acetylserine (S2). Residues C47, H68, C98, C101, C104, C112, and C175 each contribute to the Zn(2+) site. Residues 200–205 (GLGGVG), D224, and K229 each bind NAD(+). Residue K234 is modified to N6-succinyllysine. 293–295 (VGV) contacts NAD(+). Residue K340 is modified to N6-succinyllysine. An NAD(+)-binding site is contributed by R370.

This sequence belongs to the zinc-containing alcohol dehydrogenase family. Class-I subfamily. Dimer of identical or non-identical chains of three types (A, B, C), which are coded by 3 separate genes at different loci. It depends on Zn(2+) as a cofactor. Expressed at high levels in the liver, small intestine and eye, at moderate levels in kidney, ovary and uterus, and at low levels in the spinal cord, thymus, heart, stomach mucosa, skin and testis.

The protein localises to the cytoplasm. It carries out the reaction a primary alcohol + NAD(+) = an aldehyde + NADH + H(+). The enzyme catalyses a secondary alcohol + NAD(+) = a ketone + NADH + H(+). This chain is Alcohol dehydrogenase 1 (Adh1), found in Mus musculus (Mouse).